The sequence spans 22 residues: MICOS complex subunit MIC60 (22 aa).

This sequence belongs to the MICOS complex subunit Mic60 family. In terms of assembly, component of the mitochondrial contact site and cristae organizing system (MICOS) complex, composed of at least MICOS10/MIC10, CHCHD3/MIC19, CHCHD6/MIC25, APOOL/MIC27, IMMT/MIC60, APOO/MIC23/MIC26 and MICOS13/MIC13. This complex was also known under the names MINOS or MitOS complex. The MICOS complex associates with mitochondrial outer membrane proteins SAMM50, MTX1 and MTX2 (together described as components of the mitochondrial outer membrane sorting assembly machinery (SAM) complex) and DNAJC11, mitochondrial inner membrane protein TMEM11 and with HSPA9. The MICOS and SAM complexes together with DNAJC11 are part of a large protein complex spanning both membranes termed the mitochondrial intermembrane space bridging (MIB) complex. Interacts with HSPA1A/HSPA1B and OPA1, preferentially with the soluble OPA1 form. Interacts with MICOS13/MIC13, MICOS10/MIC10, CHCHD3/MIC19, CHCHD6/MIC25, SAMM50 and TMEM11. Interacts with APOO/MIC23/MIC26 and APOOL/MIC27. Interacts with ARMC1. Interacts with ARMC12.

It localises to the mitochondrion inner membrane. The protein resides in the mitochondrion. Its function is as follows. Component of the MICOS complex, a large protein complex of the mitochondrial inner membrane that plays crucial roles in the maintenance of crista junctions, inner membrane architecture, and formation of contact sites to the outer membrane. Plays an important role in the maintenance of the MICOS complex stability and the mitochondrial cristae morphology. The chain is MICOS complex subunit MIC60 from Mesocricetus auratus (Golden hamster).